Reading from the N-terminus, the 452-residue chain is MEVATDQPRWMAHHAVLNGQHPDSHHPGLAHNYMEPTQLLPPDEVDVFFNHLDSQGNPYYANSAHARARVSYSQAHARLTGSQMCRPHLLHSPGLPWLESGKTALSAAHHHNPWTVSPFGKAPLHPAARGGSLYPGTGSSACPSSSHSSPHLFGFPPTPPKDVSPDPGPASPPSSSRLEDKDSIKYQMSLSEGMKMEGGSPLRSSLAPMGTQCSTHHPIPTYPSYVPAAHDYSSGLFHPGSLLGGPASSFTPKQRSKSRSCSEGRECVNCGATATPLWRRDGTGHYLCNACGLYHKMNGQNRPLIKPKRRLSAARRAGTCCANCQTSTTTLWRRNANGDPVCNACGLYYKLHNVNRPLTMKKEGIQTRNRKMSNKSKKNKKGSECFEELSRCMQEKSSPFSAAALASHMAPMGHLAPFSHSGHILQTPTPIHPSSSLSFGHPHHSSMVTAMG.

Residues Gly130 to Asp182 are disordered. The span at Ser139–His151 shows a compositional bias: low complexity. A compositionally biased stretch (pro residues) spans Pro156–Pro172. 2 consecutive GATA-type zinc fingers follow at residues Cys267–Cys291 and Cys321–Cys345. Residues Gln426–Ser438 show a composition bias toward polar residues. Positions Gln426–Gly452 are disordered.

In terms of tissue distribution, expressed in the developing ventral blood island, and in the embryonic nervous system.

The protein resides in the nucleus. This is GATA-binding factor 2 (gata2) from Xenopus laevis (African clawed frog).